We begin with the raw amino-acid sequence, 457 residues long: Putative metabolite transport protein YwtG (457 aa).

A run of 12 helical transmembrane segments spans residues 7–27 (IWLYFFGALGGALYGYDTGVI), 38–58 (LGLNAFTEGLVVSSLLVGAIL), 75–95 (AIMAAALLFCIGGLGVALAPN), 97–117 (GVMVLFRIILGLAVGTSTTIV), 136–156 (LNQLMITVGILLSYIVNYIFA), 163–183 (WMLGLAAVPSLLLLIGILFMP), 240–260 (ALIAGLGLAFLQQFIGTNTII), 276–296 (ASILGTVGIGTVNVLMTLVAI), 309–329 (LFGNAGMVISLIVLALVNLFF), 340–360 (VICLGVFIVVFAVSWGPVVWV), 377–397 (VSTLMLHVGTLIVSLTYPILM), and 400–420 (IGISYLFLIYAAIGIMAFLFV). The disordered stretch occupies residues 438–457 (DLRDKNGQGGAAGKQQTVGT).

This sequence belongs to the major facilitator superfamily. Sugar transporter (TC 2.A.1.1) family.

The protein resides in the cell membrane. This is Putative metabolite transport protein YwtG (ywtG) from Bacillus subtilis (strain 168).